The following is a 552-amino-acid chain: uncharacterized protein (552 aa).

Residues 1–59 are disordered; that stretch reads MPLEKTNTHDSTATVEDQEATDNPMHLTQSRMLDLAGNPNRTTSRQSETLFPNGVDLNY. A compositionally biased stretch (polar residues) spans 39-50; it reads PNRTTSRQSETL. The next 12 membrane-spanning stretches (helical) occupy residues 116 to 136, 158 to 178, 181 to 201, 203 to 223, 238 to 258, 271 to 291, 345 to 365, 383 to 403, 424 to 444, 450 to 470, 484 to 506, and 519 to 539; these read ITIV…VIAG, LMVV…EMIG, IVYL…ALAP, IACL…PLTL, GLAI…GPLV, WIFW…LPVP, ILVC…GYFF, GLMF…TPFL, LVGM…FAWT, IWIG…LFYF, CASA…PLFI, and FFLL…FYLF.

Belongs to the major facilitator superfamily.

The protein localises to the membrane. This is an uncharacterized protein from Schizosaccharomyces pombe (strain 972 / ATCC 24843) (Fission yeast).